A 238-amino-acid polypeptide reads, in one-letter code: U2 small nuclear ribonucleoprotein A' (238 aa).

LRR repeat units follow at residues 19-40 (KQVTLSLRSLKIPYLENLGITK), 42-63 (TYEVIDLTDNELIELSNFPRLK), 64-84 (NLKVLLVGNNNITGINDDKLP), and 89-110 (HLQSISFIHNNISKFSDVRILC). In terms of domain architecture, LRRCT spans 123–161 (NPITDSPNYRYFIVWLIPTLKVLDFSKVKQKELVKAKEL).

The protein belongs to the U2 small nuclear ribonucleoprotein A family. Associated with the spliceosome.

It localises to the nucleus. Its function is as follows. Involved in pre-mRNA splicing. This chain is U2 small nuclear ribonucleoprotein A' (LEA1), found in Debaryomyces hansenii (strain ATCC 36239 / CBS 767 / BCRC 21394 / JCM 1990 / NBRC 0083 / IGC 2968) (Yeast).